Here is a 520-residue protein sequence, read N- to C-terminus: Peptide chain release factor 3 (520 aa).

The tr-type G domain maps to 8 to 277 (ESRKTFAIIS…HAPMPNARQT (270 aa)). Residues 17 to 24 (SHPDAGKT), 85 to 89 (DTPGH), and 139 to 142 (NKLD) each bind GTP.

It belongs to the TRAFAC class translation factor GTPase superfamily. Classic translation factor GTPase family. PrfC subfamily.

Its subcellular location is the cytoplasm. In terms of biological role, increases the formation of ribosomal termination complexes and stimulates activities of RF-1 and RF-2. It binds guanine nucleotides and has strong preference for UGA stop codons. It may interact directly with the ribosome. The stimulation of RF-1 and RF-2 is significantly reduced by GTP and GDP, but not by GMP. In Staphylococcus haemolyticus (strain JCSC1435), this protein is Peptide chain release factor 3.